The following is a 139-amino-acid chain: D-ribose pyranase (139 aa).

H20 (proton donor) is an active-site residue. Residues D28, H106, and 128–130 (YAN) contribute to the substrate site.

This sequence belongs to the RbsD / FucU family. RbsD subfamily. As to quaternary structure, homodecamer.

The protein resides in the cytoplasm. It catalyses the reaction beta-D-ribopyranose = beta-D-ribofuranose. It functions in the pathway carbohydrate metabolism; D-ribose degradation; D-ribose 5-phosphate from beta-D-ribopyranose: step 1/2. In terms of biological role, catalyzes the interconversion of beta-pyran and beta-furan forms of D-ribose. The chain is D-ribose pyranase from Salmonella choleraesuis (strain SC-B67).